The chain runs to 626 residues: Probable potassium transport system protein Kup 3 (626 aa).

12 consecutive transmembrane segments (helical) span residues 10–30 (LATL…TSPL), 51–71 (VLGI…LKYV), 107–127 (VLLG…TPAI), 141–161 (PAFK…LFIF), 173–193 (FGPV…AAIV), 216–236 (LLGF…EALY), 251–271 (WLGY…ALLL), 293–313 (LVAL…SGAF), 341–361 (IYLP…VIEF), 371–391 (YGIA…AVAV), 401–421 (AMLG…ANSV), and 423–443 (IADG…LLTT).

It belongs to the HAK/KUP transporter (TC 2.A.72) family.

The protein resides in the cell inner membrane. The catalysed reaction is K(+)(in) + H(+)(in) = K(+)(out) + H(+)(out). Its function is as follows. Transport of potassium into the cell. Likely operates as a K(+):H(+) symporter. This is Probable potassium transport system protein Kup 3 from Dechloromonas aromatica (strain RCB).